We begin with the raw amino-acid sequence, 292 residues long: Leucine-rich repeat-containing protein 10B (292 aa).

Residues 1 to 20 are disordered; sequence MGIAESTPDELPSDAEEQLR. The span at 7–16 shows a compositional bias: acidic residues; that stretch reads TPDELPSDAE. LRR repeat units follow at residues 22 to 43, 45 to 66, 68 to 90, 91 to 112, 114 to 136, 137 to 158, 160 to 181, 183 to 204, and 205 to 226; these read GDQQ…VCAL, RLQK…IEEL, ELRI…CRLP, RLTR…FAQL, SLRC…LRLV, ALQS…LPRM, GLRG…LLRM, RLHI…HPLR, and ALRV…ADTV. Residues 236–261 form a disordered region; it reads RMAERDEPTPRPPPRRPARAFEDEEE.

This is Leucine-rich repeat-containing protein 10B (LRRC10B) from Homo sapiens (Human).